The following is a 211-amino-acid chain: Redox-sensing transcriptional repressor Rex (211 aa).

Positions 17 to 56 (LYYRFVSILKGKGIDRVNSKTISEALQIDSATIRRDFSYF) form a DNA-binding region, H-T-H motif. Residue 91-96 (GIGNLG) participates in NAD(+) binding.

The protein belongs to the transcriptional regulatory Rex family. As to quaternary structure, homodimer.

The protein localises to the cytoplasm. Functionally, modulates transcription in response to changes in cellular NADH/NAD(+) redox state. This Staphylococcus epidermidis (strain ATCC 35984 / DSM 28319 / BCRC 17069 / CCUG 31568 / BM 3577 / RP62A) protein is Redox-sensing transcriptional repressor Rex.